A 104-amino-acid chain; its full sequence is Large ribosomal subunit protein bL21 (104 aa).

Basic residues predominate over residues 78–91 (KRRRQNSRRKRGHR). The interval 78–104 (KRRRQNSRRKRGHRQDHTVVRITGISA) is disordered.

The protein belongs to the bacterial ribosomal protein bL21 family. As to quaternary structure, part of the 50S ribosomal subunit. Contacts protein L20.

Functionally, this protein binds to 23S rRNA in the presence of protein L20. This is Large ribosomal subunit protein bL21 from Methylobacterium radiotolerans (strain ATCC 27329 / DSM 1819 / JCM 2831 / NBRC 15690 / NCIMB 10815 / 0-1).